A 383-amino-acid chain; its full sequence is Acetylornithine deacetylase (383 aa).

Position 80 (His80) interacts with Zn(2+). Asp82 is an active-site residue. Asp112 contacts Zn(2+). Residue Glu144 is part of the active site. Residues Glu145, Glu169, and His355 each contribute to the Zn(2+) site.

It belongs to the peptidase M20A family. ArgE subfamily. In terms of assembly, homodimer. Zn(2+) is required as a cofactor. The cofactor is Co(2+). Glutathione serves as cofactor.

The protein resides in the cytoplasm. It catalyses the reaction N(2)-acetyl-L-ornithine + H2O = L-ornithine + acetate. The protein operates within amino-acid biosynthesis; L-arginine biosynthesis; L-ornithine from N(2)-acetyl-L-ornithine (linear): step 1/1. In terms of biological role, catalyzes the hydrolysis of the amide bond of N(2)-acetylated L-amino acids. Cleaves the acetyl group from N-acetyl-L-ornithine to form L-ornithine, an intermediate in L-arginine biosynthesis pathway, and a branchpoint in the synthesis of polyamines. The polypeptide is Acetylornithine deacetylase (Pectobacterium carotovorum subsp. carotovorum (strain PC1)).